A 676-amino-acid polypeptide reads, in one-letter code: GRB2-associated-binding protein 2 (676 aa).

S2 carries the post-translational modification Phosphoserine. The 112-residue stretch at 6–117 (DVVCTGWLRK…WVQSICQICG (112 aa)) folds into the PH domain. A disordered region spans residues 127 to 178 (SLRNVSSAGHGPRSSPAELSSSSQHLLRERKSSAPSHSSQPTLFTFEPPVSN). Residues S133, S140, S141, S148, S149, S159, S164, S210, S218, S223, and S264 each carry the phosphoserine modification. The segment covering 140–149 (SSPAELSSSS) has biased composition (low complexity). The span at 159-169 (SAPSHSSQPTL) shows a compositional bias: polar residues. Phosphothreonine is present on T265. Residue Y266 is modified to Phosphotyrosine. T278 bears the Phosphothreonine mark. Phosphoserine occurs at positions 281 and 285. T287 carries the post-translational modification Phosphothreonine. Y293 carries the post-translational modification Phosphotyrosine. Position 331 is a phosphothreonine (T331). The tract at residues 341 to 430 (VATPGDSAIA…RSAESMSDGV (90 aa)) is disordered. The short motif at 351-358 (PPPRPPKP) is the SH3-binding element. S368 bears the Phosphoserine mark. 2 positions are modified to phosphothreonine: T385 and T391. The residue at position 405 (S405) is a Phosphoserine. At T408 the chain carries Phosphothreonine. A phosphoserine mark is found at S422 and S425. Phosphotyrosine is present on Y452. The residue at position 480 (S480) is a Phosphoserine. Positions 492 to 531 (PSTTLPVHRGPSRGSEIQPPPVNRNLKPDRKAKPTPLDLR) are disordered. The SH3-binding motif lies at 510–519 (PPPVNRNLKP). Phosphoserine is present on S543. Polar residues-rich tracts occupy residues 556-577 (FNSS…STDS) and 589-611 (NPVS…STGS). Disordered regions lie at residues 556–643 (FNSS…KVDY) and 656–676 (NTMQ…GAKL). S622 and S623 each carry phosphoserine. Residue Y643 is modified to Phosphotyrosine. The segment covering 656–670 (NTMQEWTDVRQSSEP) has biased composition (polar residues).

This sequence belongs to the GAB family. As to quaternary structure, part of a complex composed of EEIG1, TNFRSF11A/RANK, PLCG2, GAB2, TEC and BTK; complex formation increases in the presence of TNFSF11/RANKL. Interacts with SHC1; may mediate interaction with receptors. Interacts with SYK. Interacts with PI-3 kinase. Interacts with GRB2 (via SH3 2 domain). Interacts (phosphorylated) with PTPN11. Interacts with TNFRSF11A (via cytoplasmic domain). Interacts (phosphorylated) with 14-3-3 family proteins SFN, YWHAB, YWHAE, YWHAG, YWHAH, YWHAQ and YWHAZ; prevents interaction with GRB2 and attenuates GAB2 signaling. Interacts with HCK. In terms of processing, phosphorylated on tyrosine residue(s) by the thrombopoietin receptor (TPOR), stem cell factor receptor (SCFR), and T-cell and B-cell antigen receptors, gp130, IL-2R and IL-3R. Phosphorylated upon stimulation of TNFRSF11A/RANK by TNFSF11/RANKL. Phosphorylated upon EGF stimulation. Phosphorylated on tyrosine residues by HCK upon IL6 signaling. Dephosphorylated by PTPN11.

Its subcellular location is the cytoplasm. It is found in the cell membrane. The protein localises to the membrane raft. In terms of biological role, adapter protein which acts downstream of several membrane receptors including cytokine, antigen, hormone, cell matrix and growth factor receptors to regulate multiple signaling pathways. Regulates osteoclast differentiation mediating the TNFRSF11A/RANK signaling. In allergic response, it plays a role in mast cells activation and degranulation through PI-3-kinase regulation. Also involved in the regulation of cell proliferation and hematopoiesis. This chain is GRB2-associated-binding protein 2 (GAB2), found in Homo sapiens (Human).